A 247-amino-acid polypeptide reads, in one-letter code: Phycobilisome rod-core linker polypeptide CpcG2 (247 aa).

The PBS-linker domain occupies 11–189 (SSQNQRVPGY…YWRDKLENER (179 aa)).

The protein belongs to the phycobilisome linker protein family. As to quaternary structure, the phycobilisome is a hemidiscoidal structure that is composed of two distinct substructures: a core complex and a number of rods radiating from the core.

The protein localises to the cellular thylakoid membrane. In terms of biological role, rod-core linker protein required for attachment of phycocyanin to allophycocyanin in cores of phycobilisomes. Its function is as follows. Linker polypeptides determine the state of aggregation and the location of the disk-shaped phycobiliprotein units within the phycobilisome and modulate their spectroscopic properties in order to mediate a directed and optimal energy transfer. This is Phycobilisome rod-core linker polypeptide CpcG2 (cpcG2) from Mastigocladus laminosus (Fischerella sp.).